The chain runs to 507 residues: ATP synthase subunit alpha (507 aa).

Residue 169 to 176 (GDRQIGKT) participates in ATP binding.

The protein belongs to the ATPase alpha/beta chains family. As to quaternary structure, F-type ATPases have 2 components, CF(1) - the catalytic core - and CF(0) - the membrane proton channel. CF(1) has five subunits: alpha(3), beta(3), gamma(1), delta(1), epsilon(1). CF(0) has three main subunits: a(1), b(2) and c(9-12). The alpha and beta chains form an alternating ring which encloses part of the gamma chain. CF(1) is attached to CF(0) by a central stalk formed by the gamma and epsilon chains, while a peripheral stalk is formed by the delta and b chains.

It is found in the cell inner membrane. The enzyme catalyses ATP + H2O + 4 H(+)(in) = ADP + phosphate + 5 H(+)(out). Functionally, produces ATP from ADP in the presence of a proton gradient across the membrane. The alpha chain is a regulatory subunit. This chain is ATP synthase subunit alpha, found in Desulfotalea psychrophila (strain LSv54 / DSM 12343).